Consider the following 524-residue polypeptide: Probable aminopeptidase NPEPL1 (524 aa).

Zn(2+) is bound by residues Lys260 and Asp265. Lys272 is a catalytic residue. Zn(2+) is bound by residues Asp283, Asp342, and Glu344. The active site involves Arg346.

Belongs to the peptidase M17 family. Zn(2+) serves as cofactor. Mn(2+) is required as a cofactor.

Its function is as follows. Probably catalyzes the removal of unsubstituted N-terminal amino acids from various peptides. The chain is Probable aminopeptidase NPEPL1 (Npepl1) from Mus musculus (Mouse).